The sequence spans 62 residues: Large ribosomal subunit protein bL28 (62 aa).

Belongs to the bacterial ribosomal protein bL28 family.

The sequence is that of Large ribosomal subunit protein bL28 from Clostridioides difficile (strain 630) (Peptoclostridium difficile).